The primary structure comprises 213 residues: Large ribosomal subunit protein uL3 (213 aa).

It belongs to the universal ribosomal protein uL3 family. As to quaternary structure, part of the 50S ribosomal subunit. Forms a cluster with proteins L14 and L19.

Its function is as follows. One of the primary rRNA binding proteins, it binds directly near the 3'-end of the 23S rRNA, where it nucleates assembly of the 50S subunit. In Desulforudis audaxviator (strain MP104C), this protein is Large ribosomal subunit protein uL3.